The following is a 376-amino-acid chain: 1-deoxy-D-xylulose 5-phosphate reductoisomerase (376 aa).

6 residues coordinate NADPH: Thr-12, Gly-13, Ser-14, Ile-15, Asn-39, and Asn-116. A 1-deoxy-D-xylulose 5-phosphate-binding site is contributed by Lys-117. Glu-118 is an NADPH binding site. Residue Asp-142 coordinates Mn(2+). Ser-143, Glu-144, Ser-164, and His-187 together coordinate 1-deoxy-D-xylulose 5-phosphate. Residue Glu-144 coordinates Mn(2+). Gly-193 serves as a coordination point for NADPH. Positions 200, 205, 206, and 209 each coordinate 1-deoxy-D-xylulose 5-phosphate. Glu-209 is a binding site for Mn(2+).

It belongs to the DXR family. Mg(2+) serves as cofactor. Requires Mn(2+) as cofactor.

The catalysed reaction is 2-C-methyl-D-erythritol 4-phosphate + NADP(+) = 1-deoxy-D-xylulose 5-phosphate + NADPH + H(+). Its pathway is isoprenoid biosynthesis; isopentenyl diphosphate biosynthesis via DXP pathway; isopentenyl diphosphate from 1-deoxy-D-xylulose 5-phosphate: step 1/6. Functionally, catalyzes the NADPH-dependent rearrangement and reduction of 1-deoxy-D-xylulose-5-phosphate (DXP) to 2-C-methyl-D-erythritol 4-phosphate (MEP). In Thermotoga maritima (strain ATCC 43589 / DSM 3109 / JCM 10099 / NBRC 100826 / MSB8), this protein is 1-deoxy-D-xylulose 5-phosphate reductoisomerase.